Reading from the N-terminus, the 430-residue chain is Trigger factor (430 aa).

In terms of domain architecture, PPIase FKBP-type spans 163 to 248 (GNIAIIDFKG…IKDIKVKELP (86 aa)).

This sequence belongs to the FKBP-type PPIase family. Tig subfamily.

It is found in the cytoplasm. The enzyme catalyses [protein]-peptidylproline (omega=180) = [protein]-peptidylproline (omega=0). Involved in protein export. Acts as a chaperone by maintaining the newly synthesized protein in an open conformation. Functions as a peptidyl-prolyl cis-trans isomerase. In Clostridium botulinum (strain Kyoto / Type A2), this protein is Trigger factor.